A 230-amino-acid chain; its full sequence is Large ribosomal subunit protein uL1 (230 aa).

The protein belongs to the universal ribosomal protein uL1 family. In terms of assembly, part of the 50S ribosomal subunit.

In terms of biological role, binds directly to 23S rRNA. The L1 stalk is quite mobile in the ribosome, and is involved in E site tRNA release. Functionally, protein L1 is also a translational repressor protein, it controls the translation of the L11 operon by binding to its mRNA. The protein is Large ribosomal subunit protein uL1 of Rhodopseudomonas palustris (strain BisB18).